The primary structure comprises 234 residues: Dienlactone hydrolase 2 (234 aa).

Active-site residues include Cys-143, Asp-167, and His-199.

This sequence belongs to the dienelactone hydrolase family.

It functions in the pathway xenobiotic degradation. Dienlactone hydrolase; part of the Fusarium detoxification of benzoxazolinone cluster 2 (FDB2) involved in the degradation of benzoxazolinones produced by the host plant. Maize, wheat, and rye produce the 2 benzoxazinone phytoanticipins 2,4-dihy-droxy-7-methoxy-1,4-benzoxazin-3-one (DIMBOA) and 2,4-dihydroxy-1,4-benzoxazin-3-one (DIBOA) that, due to their inherent instability once released, spontaneously degrade to the more stable corresponding benzoxazolinones, 6-methoxy-2-benzoxazolinone (MBOA) and 2-benzoxazolinone (BOA), respectively. The first step in the detoxification of benzoxazolinones involves the hydrolysis of the cyclic ester bond of benzoxazolinones by the FDB1 cluster gamma-lactamase MBL1 to aminophenols. MBL1 is able to convert BOA into 2-aminophenol (2-AP), as well as MBOA into 5-methoxy-2-aminophenol (2-AMP). The FDB2 cluster N-malonyltransferase FDB2/NAT1 then metabolizes aminophenols via N-malonylation to non-toxic malonamic acids. FDB2/NAT1 converts 2-AP into N-(2-hydroxyphenyl) malonamic acid (HPMA) and 2-AMP into N-(2-hydroxy-4-methoxyphenyl) malonamic acid (HMPMA). The duplicated dienlactone hydrolases DLH1 and DLH2 may provide redundant function for hydrolyzing the lactone moiety in the BOA molecule. The roles of the amidases and other enzymes encoded by the 2 FDB clusters have not been identified so far. This Gibberella moniliformis (strain M3125 / FGSC 7600) (Maize ear and stalk rot fungus) protein is Dienlactone hydrolase 2.